The following is a 342-amino-acid chain: tRNA N6-adenosine threonylcarbamoyltransferase (342 aa).

2 residues coordinate Fe cation: histidine 111 and histidine 115. Substrate-binding positions include 134–138 (LVSGG), aspartate 167, glycine 180, and asparagine 275. Aspartate 303 contributes to the Fe cation binding site.

The protein belongs to the KAE1 / TsaD family. Requires Fe(2+) as cofactor.

The protein localises to the cytoplasm. It carries out the reaction L-threonylcarbamoyladenylate + adenosine(37) in tRNA = N(6)-L-threonylcarbamoyladenosine(37) in tRNA + AMP + H(+). Required for the formation of a threonylcarbamoyl group on adenosine at position 37 (t(6)A37) in tRNAs that read codons beginning with adenine. Is involved in the transfer of the threonylcarbamoyl moiety of threonylcarbamoyl-AMP (TC-AMP) to the N6 group of A37, together with TsaE and TsaB. TsaD likely plays a direct catalytic role in this reaction. The sequence is that of tRNA N6-adenosine threonylcarbamoyltransferase from Paraburkholderia xenovorans (strain LB400).